Consider the following 685-residue polypeptide: Galactocerebrosidase (685 aa).

Positions 1–42 (MAEWLLSASRQRRVKAMTAAAGSAGRAAVPFLLCALLAPGGA) are cleaved as a signal peptide. Residue Thr-109 participates in substrate binding. The N-linked (GlcNAc...) asparagine glycan is linked to Asn-143. Substrate contacts are provided by Trp-151 and Asn-197. Glu-198 serves as the catalytic Proton donor/acceptor. Glu-274 functions as the Nucleophile in the catalytic mechanism. Cys-287 and Cys-394 are joined by a disulfide. Asn-379 carries N-linked (GlcNAc...) asparagine glycosylation. Arg-396 serves as a coordination point for substrate. Residues Asn-403, Asn-451, Asn-556, Asn-559, and Asn-602 are each glycosylated (N-linked (GlcNAc...) asparagine).

Belongs to the glycosyl hydrolase 59 family.

Its subcellular location is the lysosome. It carries out the reaction a beta-D-galactosyl-(1&lt;-&gt;1')-N-acylsphing-4-enine + H2O = an N-acylsphing-4-enine + D-galactose. The enzyme catalyses beta-D-galactosyl-(1&lt;-&gt;1)-sphing-4-enine + H2O = sphing-4-enine + D-galactose. The catalysed reaction is a D-galactosylceramide + H2O = an N-acyl-sphingoid base + D-galactose. Its function is as follows. Hydrolyzes the galactose ester bonds of glycolipids such as galactosylceramide and galactosylsphingosine. Enzyme with very low activity responsible for the lysosomal catabolism of galactosylceramide, a major lipid in myelin, kidney and epithelial cells of small intestine and colon. This Macaca mulatta (Rhesus macaque) protein is Galactocerebrosidase.